The primary structure comprises 183 residues: NEDD8-conjugating enzyme Ubc12 (183 aa).

The residue at position 1 (Met-1) is an N-acetylmethionine. Residues 1–29 (MIKLFSLKQQKKEEESAGGTKGSSKKASA) are disordered. The interaction with UBA3 stretch occupies residues 1–57 (MIKLFSLKQQKKEEESAGGTKGSSKKASAAQLRIQKDINELNLPKTCDISFSDPDDL). N6-acetyllysine is present on Lys-3. The UBC core domain maps to 29-173 (AAQLRIQKDI…VQRSMRGGYI (145 aa)). Ser-50 is modified (phosphoserine). The Glycyl thioester intermediate role is filled by Cys-111. At Arg-169 the chain carries Asymmetric dimethylarginine; alternate. Arg-169 is modified (omega-N-methylarginine; alternate).

The protein belongs to the ubiquitin-conjugating enzyme family. UBC12 subfamily. Interacts with UBA3 and RBX1. Interacts (N-terminally acetylated form) with (via DCUN1 domain) DCUN1D1, DCUN1D2, DCUN1D3, DCUN1D4 and DCUN1D5. In terms of processing, the acetylation of Met-1 increases affinity for DCUN1D1 by about 2 orders of magnitude and is crucial for NEDD8 transfer to cullins.

It carries out the reaction [E1 NEDD8-activating enzyme]-S-[NEDD8 protein]-yl-L-cysteine + [E2 NEDD8-conjugating enzyme]-L-cysteine = [E1 NEDD8-activating enzyme]-L-cysteine + [E2 NEDD8-conjugating enzyme]-S-[NEDD8-protein]-yl-L-cysteine.. It participates in protein modification; protein neddylation. Functionally, accepts the ubiquitin-like protein NEDD8 from the UBA3-NAE1 E1 complex and catalyzes its covalent attachment to other proteins. The specific interaction with the E3 ubiquitin ligase RBX1, but not RBX2, suggests that the RBX1-UBE2M complex neddylates specific target proteins, such as CUL1, CUL2, CUL3 and CUL4. Involved in cell proliferation. This Mus musculus (Mouse) protein is NEDD8-conjugating enzyme Ubc12 (Ube2m).